Reading from the N-terminus, the 232-residue chain is Caffeoyl-CoA O-methyltransferase (232 aa).

K6 serves as a coordination point for substrate. Residues T48, E70, 72-73 (GV), S78, D96, and A125 each bind S-adenosyl-L-methionine. D148 lines the substrate pocket. D148 serves as a coordination point for a divalent metal cation. D150 provides a ligand contact to S-adenosyl-L-methionine. Positions 174 and 175 each coordinate a divalent metal cation. Residue N179 coordinates substrate.

The protein belongs to the class I-like SAM-binding methyltransferase superfamily. Cation-dependent O-methyltransferase family. CCoAMT subfamily. It depends on a divalent metal cation as a cofactor.

The enzyme catalyses (E)-caffeoyl-CoA + S-adenosyl-L-methionine = (E)-feruloyl-CoA + S-adenosyl-L-homocysteine + H(+). It functions in the pathway aromatic compound metabolism; phenylpropanoid biosynthesis. In terms of biological role, methylates caffeoyl-CoA to feruloyl-CoA and 5-hydroxyferuloyl-CoA to sinapoyl-CoA. Plays a role in the synthesis of feruloylated polysaccharides. Involved in the reinforcement of the plant cell wall. Also involved in the responding to wounding or pathogen challenge by the increased formation of cell wall-bound ferulic acid polymers. The protein is Caffeoyl-CoA O-methyltransferase of Citrus natsudaidai (Natsudaidai orange).